Here is a 69-residue protein sequence, read N- to C-terminus: MRTLCSLLLIGCLLFSYDTPVVGFLRRSVSGFQECHSKGGYCYRYYCPRPHRRLGSCYPYAANCCRRRR.

Residues 1–23 form the signal peptide; the sequence is MRTLCSLLLIGCLLFSYDTPVVG. 3 disulfide bridges follow: Cys35/Cys64, Cys42/Cys57, and Cys47/Cys65.

This sequence belongs to the beta-defensin family.

The protein localises to the secreted. Functionally, has antibacterial activity. This chain is Beta-defensin 11 (Defb11), found in Rattus norvegicus (Rat).